A 115-amino-acid polypeptide reads, in one-letter code: Con-Ins G1c (115 aa).

Positions 1–24 (MTTSFYFLLMALGLLLYVCQSSFG) are cleaved as a signal peptide. Residues 25 to 29 (NQHTR) constitute a propeptide that is removed on maturation. Proline 34 is subject to 4-hydroxyproline; partial. Cystine bridges form between cysteine 38–cysteine 101, cysteine 50–cysteine 114, and cysteine 100–cysteine 105. Position 41 is a 4-carboxyglutamate (glutamate 41). Residues 53-94 (KRNDAGKKRGRASPLWQRRGSLSQLKARAKRNGAFHLPRDGR) constitute a propeptide, c peptide. The residue at position 98 (glutamate 98) is a 4-carboxyglutamate. Proline 104 is modified (4-hydroxyproline; partial). Glutamate 109 carries the post-translational modification 4-carboxyglutamate; partial.

It belongs to the insulin family. Heterodimer of A and B chains; disulfide-linked. In terms of processing, is different from Con-Ins G1a (AC A0A0B5AC95) due to absence of amidation at Cys-114. As to expression, expressed by the venom gland.

The protein localises to the secreted. This venom insulin, from a fish-hunting cone snail, facilitates prey capture by rapidly inducing hypoglycemic shock. It is one of the smallest known insulin found in nature and lacks the C-terminal segment of the B chain that, in human insulin, mediates engagement of the insulin receptor (INSR) and assembly of the hormone's hexameric storage form. Despite lacking this segment, it both binds and activates human insulin receptor (long isoform (HIR-B)) with only a 10-fold lower potency. In vivo, intraperitoneal injection of this peptide into zebrafish lowers blood glucose with the same potency than human insulin. In addition, when applied to water, this peptide reduces overall locomotor activity of zebrafish larvae, observed as a significant decrease in the percentage of time spent swimming and movement frequency. This Conus geographus (Geography cone) protein is Con-Ins G1c.